The sequence spans 794 residues: Cilia- and flagella-associated protein 184 (794 aa).

Disordered regions lie at residues 1–105 (MASE…VNSE) and 386–458 (AHEE…QQDT). Low complexity predominate over residues 24–35 (QMQQYMMEMQRQ). Over residues 49–69 (EGYEEGQEGEGYGEEYGDQDY) the composition is skewed to acidic residues. Composition is skewed to basic and acidic residues over residues 89-103 (QVNE…RRVN), 386-411 (AHEE…KDYG), and 431-445 (ISDK…HAEQ). The span at 446 to 456 (EQNQQAAQQQQ) shows a compositional bias: low complexity. Coiled-coil stretches lie at residues 461-613 (NKEI…LRLR) and 638-775 (FEQL…ANQI). The segment covering 774–787 (QISTQNMQSQNNSL) has biased composition (polar residues). The disordered stretch occupies residues 774–794 (QISTQNMQSQNNSLKKPYQPY).

Belongs to the CFAP184 family. Forms a complex with CFAP263; the interaction is required for functional activity in cilia.

It localises to the cell projection. The protein resides in the cilium. In terms of biological role, in complex with CFAP263, acts as a regulator of ciliary beating that connects radial spoke 3 (RS3) to the inner dynein arm (IDA) and the nexin-dynein regulatory complex (N-DRC). The complex is positioned parallel to N-DRC and forms a connection between the arch at the base of RS3, the IDA tail and N-DRC. The chain is Cilia- and flagella-associated protein 184 (CFAP184) from Tetrahymena thermophila (strain SB210).